Reading from the N-terminus, the 276-residue chain is Rhomboid protease GlpG (276 aa).

The next 6 helical transmembrane spans lie at 94–114 (GPVTWIVMLACVVVYIAMSLI), 142–162 (IFMHFSLMHILFNLLWWWYLG), 169–189 (LGSGKLIVITVISALLSGYVQ), 192–212 (FSGPWFGGLSGVVYALMGYVW), 229–249 (LIIFALLWIVASWFDWFGMSM), and 250–270 (ANGAHIAGLIVGLAMAFVDTL). S201 (nucleophile) is an active-site residue. H254 is a catalytic residue.

The protein belongs to the peptidase S54 family.

Its subcellular location is the cell inner membrane. The catalysed reaction is Cleaves type-1 transmembrane domains using a catalytic dyad composed of serine and histidine that are contributed by different transmembrane domains.. Functionally, rhomboid-type serine protease that catalyzes intramembrane proteolysis. The protein is Rhomboid protease GlpG of Salmonella paratyphi A (strain ATCC 9150 / SARB42).